We begin with the raw amino-acid sequence, 435 residues long: Histone acetyltransferase type B subunit 2 (435 aa).

WD repeat units follow at residues 135–175, 188–228, 238–278, 284–324, and 328–368; these read NHAG…SKAP, GQTK…KQDP, GHSA…TAKA, GHNA…TKHH, and AHTN…AEQT. The tract at residues 370–374 is interaction with the histone H4 N-terminus; the sequence is DDAED. One copy of the WD 6 repeat lies at 385-425; that stretch reads GHTSKVCDISWSPSSPWTIASASEDNILQVWEPSRHLRTPY.

It belongs to the WD repeat RBAP46/RBAP48/MSI1 family. As to quaternary structure, component of the HAT-B complex composed of at least HAT1 and HAT2. The HAT-B complex binds to histone H4 tail.

It localises to the cytoplasm. It is found in the nucleus. Functionally, regulatory subunit of the histone acetylase B (HAT-B) complex. The complex acetylates 'Lys-12' of histone H4 which is required for telomeric silencing. This chain is Histone acetyltransferase type B subunit 2 (HAT2), found in Cryptococcus neoformans var. neoformans serotype D (strain B-3501A) (Filobasidiella neoformans).